The following is a 181-amino-acid chain: Oligoribonuclease (181 aa).

The region spanning 8–171 (LIWIDLEMTG…DDIRESIAEL (164 aa)) is the Exonuclease domain. Residue Y129 is part of the active site.

Belongs to the oligoribonuclease family.

Its subcellular location is the cytoplasm. 3'-to-5' exoribonuclease specific for small oligoribonucleotides. In Vibrio cholerae serotype O1 (strain ATCC 39541 / Classical Ogawa 395 / O395), this protein is Oligoribonuclease.